A 323-amino-acid chain; its full sequence is Acetyl esterase (323 aa).

Positions His-91–Gly-93 match the Involved in the stabilization of the negatively charged intermediate by the formation of the oxyanion hole motif. Active-site residues include Ser-165, Asp-262, and His-292.

Belongs to the 'GDXG' lipolytic enzyme family. Homodimer. Interacts with MalT and MelA.

The protein localises to the cytoplasm. Functionally, displays esterase activity towards short chain fatty esters (acyl chain length of up to 8 carbons). Able to hydrolyze triacetylglycerol (triacetin) and tributyrylglycerol (tributyrin), but not trioleylglycerol (triolein) or cholesterol oleate. Negatively regulates MalT activity by antagonizing maltotriose binding. Inhibits MelA galactosidase activity. This is Acetyl esterase from Salmonella typhi.